A 471-amino-acid polypeptide reads, in one-letter code: A-type ATP synthase subunit B (471 aa).

The protein belongs to the ATPase alpha/beta chains family. As to quaternary structure, has multiple subunits with at least A(3), B(3), C, D, E, F, H, I and proteolipid K(x).

It localises to the cell membrane. Functionally, component of the A-type ATP synthase that produces ATP from ADP in the presence of a proton gradient across the membrane. The B chain is a regulatory subunit. The sequence is that of A-type ATP synthase subunit B from Ignicoccus hospitalis (strain KIN4/I / DSM 18386 / JCM 14125).